Here is a 272-residue protein sequence, read N- to C-terminus: NADPH-dependent aldehyde reductase 2, chloroplastic (272 aa).

Residues 1-53 (MAAASSVSSPPLCLAGRVAIVTGSSRGIGRAIAIHLAELGARVVVNYSTSPVE) constitute a chloroplast transit peptide. Residue 26 to 50 (RGIGRAIAIHLAELGARVVVNYSTS) coordinates NADP(+). S165 contributes to the substrate binding site. Residue Y179 is the Proton acceptor of the active site.

The protein belongs to the short-chain dehydrogenases/reductases (SDR) family.

It localises to the plastid. The protein localises to the chloroplast. Functionally, aldehyde reductase that catalyzes the reduction of the aldehyde carbonyl groups on saturated and alpha,beta-unsaturated aldehydes with more than 5 carbons. No activity on alpha,beta-unsaturated ketones. Can use propionaldehyde, butyraldehyde, methylglyoxal, (e)-2-pentenal, (E)-2-hexenal, (Z)-3-hexenal and (E)-2-nonenal as substrates, but not propenal (acrolein), crotonaldehyde, 2-butanone, 3-buten-2-one or 1-penten-3-one. This Arabidopsis thaliana (Mouse-ear cress) protein is NADPH-dependent aldehyde reductase 2, chloroplastic.